The chain runs to 658 residues: MTVSTSSAFHHSPLSDDVEPIIQKATRALLEKQHQDGHWVFELEADATIPAEYILLKHYLGEPQDLEIEAKIGRYLRRIQGEHGGWSLFYGGDLDLSATVKAYFALKMIGDSPDAPHMLRARNEILARGGAMRANVFTRIQLALFGAMSWEHVPQMPVELMLMPEWFPVHINKMAYWARTVLVPLLVLQALKPVARNRRGILVDELFVPDVLPTLQESGDPIWRRFFSALDKVLHKVEPYWPKNMRAKAIHSCVHFVTERLNGEDGLGAIYPAIANSVMMYDALGYPENHPERAIARRAVEKLMVLDGTEDQGDKEVYCQPCLSPIWDTALVAHAMLEVGGDEAEKSAISALSWLKPQQILDVKGDWAWRRPDLRPGGWAFQYRNDYYPDVDDTAVVTMAMDRAAKLSDLRDDFEESKARAMEWTIGMQSDNGGWGAFDANNSYTYLNNIPFADHGALLDPPTVDVSARCVSMMAQAGISITDPKMKAAVDYLLKEQEEDGSWFGRWGVNYIYGTWSALCALNVAALPHDHLAIQKAVAWLKTIQNEDGGWGENCDSYALDYSGYEPMDSTASQTAWALLGLMAVGEANSEAVTKGINWLAQNQDEEGLWKEDYYSGGGFPRVFYLRYHGYSKYFPLWALARYRNLKKANQPIVHYGM.

Residues 69–110 (EAKIGRYLRRIQGEHGGWSLFYGGDLDLSATVKAYFALKMIG) form a PFTB 1 repeat. The Proton donor role is filled by Asp392. 3 PFTB repeats span residues 418-459 (KARA…GALL), 486-526 (MKAA…NVAA), and 534-584 (IQKA…GLMA).

It belongs to the terpene cyclase/mutase family.

Its subcellular location is the cell membrane. The catalysed reaction is squalene = hop-22(29)-ene. The enzyme catalyses squalene + H2O = hopan-22-ol. It participates in secondary metabolite biosynthesis; hopanoid biosynthesis. Its function is as follows. Catalyzes the cyclization of squalene into hopene. The polypeptide is Squalene--hopene cyclase (shc) (Zymomonas mobilis subsp. mobilis (strain ATCC 31821 / ZM4 / CP4)).